The following is a 145-amino-acid chain: 3-hydroxyacyl-[acyl-carrier-protein] dehydratase FabZ (145 aa).

His47 is an active-site residue.

The protein belongs to the thioester dehydratase family. FabZ subfamily.

The protein resides in the cytoplasm. It catalyses the reaction a (3R)-hydroxyacyl-[ACP] = a (2E)-enoyl-[ACP] + H2O. Involved in unsaturated fatty acids biosynthesis. Catalyzes the dehydration of short chain beta-hydroxyacyl-ACPs and long chain saturated and unsaturated beta-hydroxyacyl-ACPs. This Vesicomyosocius okutanii subsp. Calyptogena okutanii (strain HA) protein is 3-hydroxyacyl-[acyl-carrier-protein] dehydratase FabZ.